Consider the following 269-residue polypeptide: Kafirin PGK1 (269 aa).

The first 21 residues, 1-21 (MATKIFALLALHALLVSGTTA), serve as a signal peptide directing secretion.

This sequence belongs to the zein family.

In terms of biological role, major seed storage prolamin. The protein is Kafirin PGK1 of Sorghum bicolor (Sorghum).